The sequence spans 771 residues: Ribonucleoside-diphosphate reductase large subunit (771 aa).

The ATP-cone domain occupies 1 to 92 (MFVIKRNGYK…VSNLHKETKK (92 aa)). Residues 5–6 (KR), 11–17 (ENVMFDK), Thr53, Asp57, and Lys88 each bind ATP. Residues Ser202 and Ser217 each contribute to the GDP site. DTTP contacts are provided by residues 226–228 (DSI), Lys243, and Arg256. Asn427 is a binding site for GDP. Asn427 serves as the catalytic Proton acceptor. Cys429 functions as the Cysteine radical intermediate in the catalytic mechanism. GDP is bound by residues Glu431 and 603–606 (TAST). Catalysis depends on Glu431, which acts as the Proton acceptor.

The protein belongs to the ribonucleoside diphosphate reductase large chain family. As to quaternary structure, interacts with RNR2/OPG047 subunit. The cofactor is Mg(2+).

It carries out the reaction a 2'-deoxyribonucleoside 5'-diphosphate + [thioredoxin]-disulfide + H2O = a ribonucleoside 5'-diphosphate + [thioredoxin]-dithiol. Its function is as follows. Ribonucleoside-diphosphate reductase holoenzyme provides the precursors necessary for viral DNA synthesis. Allows virus growth in non-dividing cells. Catalyzes the biosynthesis of deoxyribonucleotides from the corresponding ribonucleotides. This chain is Ribonucleoside-diphosphate reductase large subunit (OPG080), found in Homo sapiens (Human).